The following is a 642-amino-acid chain: Zinc finger protein 14 (642 aa).

Positions 4–76 constitute a KRAB domain; the sequence is VSFEDVAVNF…MVERLCESRR (73 aa). The segment at 103-125 adopts a C2H2-type 1 zinc-finger fold; the sequence is HECSFCGRDFIHHSSLNRHMRSH. The segment at 141–163 adopts a C2H2-type 2; degenerate zinc-finger fold; it reads CKCKAVGKTFSYHHCFRKHERTH. The C2H2-type 3 zinc-finger motif lies at 169–191; that stretch reads YECKQCGKAFIYYQPFQRHERTH. The segment at 197-217 adopts a C2H2-type 4; atypical zinc-finger fold; sequence YECKQCGKTFIYYQSFQKHAH. 15 C2H2-type zinc fingers span residues 223-245, 251-273, 279-301, 307-329, 335-357, 363-385, 391-413, 419-441, 447-469, 475-497, 503-525, 531-553, 559-581, 587-609, and 615-637; these read YECKQCGKAFICYQSFQRHKRTH, YECKQCGKAFSCPTYFRTHERTH, YKCKECGKAFSFLSSFRRHKRTH, YECKECGKAFFYSASFRAHVIIH, YKCKECGKAFNSSNSCRVHERTH, YECKRCGKSFSWSISLRLHERTH, YECKQCHKTFSFSSSLREHETTH, YECKQCGKTFSFSSSLQRHERTH, YECKQCGKAFRCSSYFRIHERSH, YECKQCGKVFIRSSSFRLHERTH, YECKLCGKTFSFSSSLREHEKIH, FECKQCGKAFLRSSQIRLHERTH, YQCKQCGKAFISSSKFRMHERTH, YRCKQCGKAFRFSSSVRIHERSH, and YECKQCGKAFISSSHFRLHERTH.

It belongs to the krueppel C2H2-type zinc-finger protein family.

The protein localises to the nucleus. Its function is as follows. May be involved in transcriptional regulation. The polypeptide is Zinc finger protein 14 (ZNF14) (Homo sapiens (Human)).